The primary structure comprises 271 residues: uncharacterized protein (271 aa).

The tract at residues 1 to 20 (MPDLHTLPAGSRPERAIRNN) is disordered.

The protein belongs to the PEP2 family.

This is an uncharacterized protein from Aspergillus terreus (strain NIH 2624 / FGSC A1156).